The chain runs to 123 residues: Small ribosomal subunit protein uS13 (123 aa).

The segment at 93-123 is disordered; sequence HRKGLPVRGQNTKNNARTRKGPAKAIAGKKK. The segment covering 108-123 has biased composition (basic residues); that stretch reads ARTRKGPAKAIAGKKK.

This sequence belongs to the universal ribosomal protein uS13 family. In terms of assembly, part of the 30S ribosomal subunit. Forms a loose heterodimer with protein S19. Forms two bridges to the 50S subunit in the 70S ribosome.

Located at the top of the head of the 30S subunit, it contacts several helices of the 16S rRNA. In the 70S ribosome it contacts the 23S rRNA (bridge B1a) and protein L5 of the 50S subunit (bridge B1b), connecting the 2 subunits; these bridges are implicated in subunit movement. Contacts the tRNAs in the A and P-sites. The chain is Small ribosomal subunit protein uS13 from Leuconostoc mesenteroides subsp. mesenteroides (strain ATCC 8293 / DSM 20343 / BCRC 11652 / CCM 1803 / JCM 6124 / NCDO 523 / NBRC 100496 / NCIMB 8023 / NCTC 12954 / NRRL B-1118 / 37Y).